The chain runs to 129 residues: Small ribosomal subunit protein uS11 (129 aa).

This sequence belongs to the universal ribosomal protein uS11 family. In terms of assembly, part of the 30S ribosomal subunit. Interacts with proteins S7 and S18. Binds to IF-3.

Its function is as follows. Located on the platform of the 30S subunit, it bridges several disparate RNA helices of the 16S rRNA. Forms part of the Shine-Dalgarno cleft in the 70S ribosome. The chain is Small ribosomal subunit protein uS11 from Sodalis glossinidius (strain morsitans).